The chain runs to 131 residues: Cystatin-like cysteine protease inhibitor EPIC3 (131 aa).

A signal peptide spans 1-20; it reads MAFTRSIALFAGLALAASSA. Residue asparagine 33 is glycosylated (N-linked (GlcNAc...) asparagine). A Secondary area of contact motif is present at residues 71–75; sequence QTVAG.

The protein belongs to the cystatin family.

Its subcellular location is the secreted. In terms of biological role, secreted effector that interacts with and inhibits host apoplastic pathogenesis-related papain-like cysteine proteases. Inhibition of host proteases by a pathogen extracellular protease inhibitor forms a specific type of defense-counterdefense mechanism between plants and microbial pathogens. The protein is Cystatin-like cysteine protease inhibitor EPIC3 of Phytophthora infestans (Potato late blight agent).